We begin with the raw amino-acid sequence, 180 residues long: Large ribosomal subunit protein uL5 (180 aa).

The protein belongs to the universal ribosomal protein uL5 family. Part of the 50S ribosomal subunit; part of the 5S rRNA/L5/L18/L25 subcomplex. Contacts the 5S rRNA and the P site tRNA. Forms a bridge to the 30S subunit in the 70S ribosome.

Functionally, this is one of the proteins that bind and probably mediate the attachment of the 5S RNA into the large ribosomal subunit, where it forms part of the central protuberance. In the 70S ribosome it contacts protein S13 of the 30S subunit (bridge B1b), connecting the 2 subunits; this bridge is implicated in subunit movement. Contacts the P site tRNA; the 5S rRNA and some of its associated proteins might help stabilize positioning of ribosome-bound tRNAs. The polypeptide is Large ribosomal subunit protein uL5 (Xanthomonas axonopodis pv. citri (strain 306)).